Here is a 354-residue protein sequence, read N- to C-terminus: uncharacterized protein (354 aa).

The interval 96–130 is disordered; that stretch reads QVCPASAPNGKRAMKIPKVKEPRGENSSKKSSADQ. A compositionally biased stretch (basic and acidic residues) spans 113–127; that stretch reads KVKEPRGENSSKKSS.

This is an uncharacterized protein from Caenorhabditis elegans.